Consider the following 433-residue polypeptide: MPLKKLKPVDPLKLYSALRDFGMPFMLRSAEKDSRKARFTYISAEPEFVVEVGEGTEIDGERVSDERNPLRALKGLMGERVEGRRFMGGFVGYVSYDSVHSIIGGKIEEPSVFGYYPWTFIYDHSTGALSFFYLREAPFDPEALVERARREESRLEDGGSEVISTDAGMEEFVEIVRAGKEYIYSGDVFQVVLSREYRVRTDLDALEIYKRLVELNPSPYTFILEFEKTVVGASPETMGSVEGRTFKINPIAGTAPRGRTGEEDRELEKALLSDEKERAEHVMLVDLARNDVRRVSKPGSVRLTRFFDVLKYSHVQHIESEVVGELDEGKNAFDAMEAAFPAGTLTGAPKIRAMEIIDELERSRRKVYGGAVGYFSLTGDADMAIAIRMAEIEGRKASVRAGAGIVADSVPEKEFFETENKMRAVLKALGVRE.

L-tryptophan is bound by residues Ser29 and 219-221; that span reads PYT. 253–254 lines the chorismate pocket; sequence GT. Glu280 lines the Mg(2+) pocket. Residues Tyr368, Arg388, 402–404, and Gly404 each bind chorismate; that span reads GAG. A Mg(2+)-binding site is contributed by Glu417.

Belongs to the anthranilate synthase component I family. In terms of assembly, heterotetramer consisting of two non-identical subunits: a beta subunit (TrpG) and a large alpha subunit (TrpE). Mg(2+) is required as a cofactor.

It carries out the reaction chorismate + L-glutamine = anthranilate + pyruvate + L-glutamate + H(+). It participates in amino-acid biosynthesis; L-tryptophan biosynthesis; L-tryptophan from chorismate: step 1/5. Feedback inhibited by tryptophan. Its function is as follows. Part of a heterotetrameric complex that catalyzes the two-step biosynthesis of anthranilate, an intermediate in the biosynthesis of L-tryptophan. In the first step, the glutamine-binding beta subunit (TrpG) of anthranilate synthase (AS) provides the glutamine amidotransferase activity which generates ammonia as a substrate that, along with chorismate, is used in the second step, catalyzed by the large alpha subunit of AS (TrpE) to produce anthranilate. In the absence of TrpG, TrpE can synthesize anthranilate directly from chorismate and high concentrations of ammonia. This chain is Anthranilate synthase component 1 (trpE), found in Thermococcus kodakarensis (strain ATCC BAA-918 / JCM 12380 / KOD1) (Pyrococcus kodakaraensis (strain KOD1)).